We begin with the raw amino-acid sequence, 283 residues long: MLRVAVPNKGSLSESAAEILSEAGYRRRTDSRDLTVLDPSNQVEFFFLRPKDIAIYVGSGELDLGITGRDLARDSGAPVAERLSLGFGRSTFRYAAPAGKDWKVEDLAGLRIATSYPNLVRDDLSARGIEASVIRLDGAVEISIQLGVADAIADVVGSGRTLRQHNLVAFGDTLCDSEGVLIERAGSPADDSARNQLVERVRGIVFAQQNLMLDYDCPKTILDDALKITPGLESPTLSPLADENWVAVRAMVPIKGHNGVMDELADLGAKAILASNIRSCRAL.

This sequence belongs to the ATP phosphoribosyltransferase family. Long subfamily. The cofactor is Mg(2+).

It localises to the cytoplasm. The catalysed reaction is 1-(5-phospho-beta-D-ribosyl)-ATP + diphosphate = 5-phospho-alpha-D-ribose 1-diphosphate + ATP. It functions in the pathway amino-acid biosynthesis; L-histidine biosynthesis; L-histidine from 5-phospho-alpha-D-ribose 1-diphosphate: step 1/9. With respect to regulation, feedback inhibited by histidine. Its function is as follows. Catalyzes the condensation of ATP and 5-phosphoribose 1-diphosphate to form N'-(5'-phosphoribosyl)-ATP (PR-ATP). Has a crucial role in the pathway because the rate of histidine biosynthesis seems to be controlled primarily by regulation of HisG enzymatic activity. This chain is ATP phosphoribosyltransferase, found in Rhodococcus opacus (strain B4).